Here is a 1423-residue protein sequence, read N- to C-terminus: DNA-directed RNA polymerase subunit beta' (1423 aa).

Zn(2+) contacts are provided by C71, C73, C86, and C89. Mg(2+)-binding residues include D461, D463, and D465. The Zn(2+) site is built by C815, C889, C896, and C899.

It belongs to the RNA polymerase beta' chain family. The RNAP catalytic core consists of 2 alpha, 1 beta, 1 beta' and 1 omega subunit. When a sigma factor is associated with the core the holoenzyme is formed, which can initiate transcription. The cofactor is Mg(2+). Zn(2+) serves as cofactor.

The catalysed reaction is RNA(n) + a ribonucleoside 5'-triphosphate = RNA(n+1) + diphosphate. DNA-dependent RNA polymerase catalyzes the transcription of DNA into RNA using the four ribonucleoside triphosphates as substrates. The protein is DNA-directed RNA polymerase subunit beta' of Actinobacillus pleuropneumoniae serotype 7 (strain AP76).